The following is a 179-amino-acid chain: Mediator of RNA polymerase II transcription subunit 28 (179 aa).

Residues 1–43 are disordered; sequence MASSMCGMFPGQQPPGSLPPPGPGGPGQPGLLTGTPGNRGANN. Residues 12–26 show a composition bias toward pro residues; the sequence is QQPPGSLPPPGPGGP. Positions 109–139 form a coiled coil; it reads EQVEKEDASELKNELQRKEMLIQKHLAKIHH.

This sequence belongs to the Mediator complex subunit 28 family. Component of the Mediator complex.

Its subcellular location is the nucleus. Functionally, component of the Mediator complex, a coactivator involved in the regulated transcription of nearly all RNA polymerase II-dependent genes. Mediator functions as a bridge to convey information from gene-specific regulatory proteins to the basal RNA polymerase II transcription machinery. Mediator is recruited to promoters by direct interactions with regulatory proteins and serves as a scaffold for the assembly of a functional preinitiation complex with RNA polymerase II and the general transcription factors. The polypeptide is Mediator of RNA polymerase II transcription subunit 28 (med28) (Danio rerio (Zebrafish)).